The primary structure comprises 511 residues: Anthranilate synthase component 1 (511 aa).

The disordered stretch occupies residues 1-36 (MTTHAAEAPTTDPQGAPGSQKTPDATEAEEAARATV). Residues 11-23 (TDPQGAPGSQKTP) show a composition bias toward polar residues. L-tryptophan is bound by residues S84 and 292–294 (PYM). 328 to 329 (GT) lines the chorismate pocket. E355 contributes to the Mg(2+) binding site. Chorismate contacts are provided by residues Y443, R463, 477–479 (GAG), and G479. E492 serves as a coordination point for Mg(2+).

It belongs to the anthranilate synthase component I family. Heterotetramer consisting of two non-identical subunits: a beta subunit (TrpG) and a large alpha subunit (TrpE). Mg(2+) is required as a cofactor.

The catalysed reaction is chorismate + L-glutamine = anthranilate + pyruvate + L-glutamate + H(+). It functions in the pathway amino-acid biosynthesis; L-tryptophan biosynthesis; L-tryptophan from chorismate: step 1/5. Feedback inhibited by tryptophan. Functionally, part of a heterotetrameric complex that catalyzes the two-step biosynthesis of anthranilate, an intermediate in the biosynthesis of L-tryptophan. In the first step, the glutamine-binding beta subunit (TrpG) of anthranilate synthase (AS) provides the glutamine amidotransferase activity which generates ammonia as a substrate that, along with chorismate, is used in the second step, catalyzed by the large alpha subunit of AS (TrpE) to produce anthranilate. In the absence of TrpG, TrpE can synthesize anthranilate directly from chorismate and high concentrations of ammonia. The polypeptide is Anthranilate synthase component 1 (trpE) (Streptomyces coelicolor (strain ATCC BAA-471 / A3(2) / M145)).